A 181-amino-acid polypeptide reads, in one-letter code: Acireductone dioxygenase (181 aa).

Fe(2+)-binding residues include histidine 97, histidine 99, glutamate 103, and histidine 141. The Ni(2+) site is built by histidine 97, histidine 99, glutamate 103, and histidine 141.

The protein belongs to the acireductone dioxygenase (ARD) family. Monomer. The cofactor is Fe(2+). Ni(2+) is required as a cofactor.

The catalysed reaction is 1,2-dihydroxy-5-(methylsulfanyl)pent-1-en-3-one + O2 = 3-(methylsulfanyl)propanoate + CO + formate + 2 H(+). It catalyses the reaction 1,2-dihydroxy-5-(methylsulfanyl)pent-1-en-3-one + O2 = 4-methylsulfanyl-2-oxobutanoate + formate + 2 H(+). Its pathway is amino-acid biosynthesis; L-methionine biosynthesis via salvage pathway; L-methionine from S-methyl-5-thio-alpha-D-ribose 1-phosphate: step 5/6. Its function is as follows. Catalyzes 2 different reactions between oxygen and the acireductone 1,2-dihydroxy-3-keto-5-methylthiopentene (DHK-MTPene) depending upon the metal bound in the active site. Fe-containing acireductone dioxygenase (Fe-ARD) produces formate and 2-keto-4-methylthiobutyrate (KMTB), the alpha-ketoacid precursor of methionine in the methionine recycle pathway. Ni-containing acireductone dioxygenase (Ni-ARD) produces methylthiopropionate, carbon monoxide and formate, and does not lie on the methionine recycle pathway. In Pseudomonas paraeruginosa (strain DSM 24068 / PA7) (Pseudomonas aeruginosa (strain PA7)), this protein is Acireductone dioxygenase.